The sequence spans 76 residues: ATP synthase subunit 9, mitochondrial (76 aa).

2 consecutive transmembrane segments (helical) span residues 13-35 (GISTIGLLGAGIGIAIVFAALIQ) and 50-72 (FAILGFAISEATGLFCLMISFLL).

It belongs to the ATPase C chain family. F-type ATPases have 2 components, CF(1) - the catalytic core - and CF(0) - the membrane proton channel. In yeast, the dimeric form of ATP synthase consists of 18 polypeptides: alpha, beta, gamma, delta, epsilon, 4 (B), 5 (OSCP), 6 (A), 8, 9 (C), d, E (Tim11), f, g, h, i, j and k.

Its subcellular location is the mitochondrion membrane. Its function is as follows. Mitochondrial membrane ATP synthase (F(1)F(0) ATP synthase or Complex V) produces ATP from ADP in the presence of a proton gradient across the membrane which is generated by electron transport complexes of the respiratory chain. F-type ATPases consist of two structural domains, F(1) - containing the extramembraneous catalytic core and F(0) - containing the membrane proton channel, linked together by a central stalk and a peripheral stalk. During catalysis, ATP synthesis in the catalytic domain of F(1) is coupled via a rotary mechanism of the central stalk subunits to proton translocation. Part of the complex F(0) domain. A homomeric c-ring of probably 10 subunits is part of the complex rotary element. The sequence is that of ATP synthase subunit 9, mitochondrial (ATP9) from Eremothecium gossypii (strain ATCC 10895 / CBS 109.51 / FGSC 9923 / NRRL Y-1056) (Yeast).